Here is a 601-residue protein sequence, read N- to C-terminus: FAD-binding monooxygenase stcW (601 aa).

FAD is bound by residues 42 to 43 (FS), Glu-64, Trp-73, Asp-84, Tyr-90, and Val-133.

This sequence belongs to the FAD-binding monooxygenase family. FAD serves as cofactor.

It participates in mycotoxin biosynthesis; sterigmatocystin biosynthesis. Functionally, FAD-binding monooxygenase; part of the gene cluster that mediates the biosynthesis of sterigmatocystin (ST), a polyketide-derived furanocoumarin which is part of the most toxic and carcinogenic compounds among the known mycotoxins. The first step in the biosynthesis of sterigmatocystin is the production of hexanoate by the fatty acid synthase (FAS) units stcJ and stcK. The polyketide backbone is assembled by the non-reducing polyketide synthase stcA by condensation of the starter hexanoyl-CoA and 7 malonyl-CoA extender units followed by cyclization and release of norsolorinic acid. Norsolorinic acid is the first stable intermediate in the biosynthesis of sterigmatocystin and is converted into averantin (AVN) by the ketoreductase stcE which reduces the hexanoate ketone to an alcohol. Averantin is then oxidized into 5'-hydroxyaverantin (HAVN) by the cytochrome P450 monooxygenase stcF. 5'-hydroxyaverantin is further converted to 5'-oxyaverantin (OAVN) by the 5'-hydroxyaverantin dehydrogenase stcG. The next step is the conversion of OAVN into averufin (AVF) which is catalyzed by a yet to be identified enzyme. The cytochrome P450 monooxygenase stcB and the flavin-binding monooxygenase stcW are both required for the conversion of averufin to 1-hydroxyversicolorone. The esterase stcI probably catalyzes the formation of versiconal hemiacetal acetate from 1-hydroxyversicolorone. The oxydoreductase stcN then probably catalyzes the biosynthetic step from versiconal to versicolorin B (VERB). The next step is performed by the versicolorin B desaturase stcL to produce versicolorin A (VERA). The ketoreductase stcU and the cytochrome P450 monooxygenase stcS are involved in the conversion of versicolorin A to demethylsterigmatocystin. The Baeyer-Villiger oxidas stcQ and the reductase stcR might be involved in the biosynthetic step from versicolorin A to demethylsterigmatocystin. The final step in the biosynthesis of sterigmatocystin is the methylation of demethylsterigmatocystin catalyzed by the methyltransferase stcP. The protein is FAD-binding monooxygenase stcW of Emericella nidulans (strain FGSC A4 / ATCC 38163 / CBS 112.46 / NRRL 194 / M139) (Aspergillus nidulans).